A 277-amino-acid chain; its full sequence is Putative envelope-preserving system protein Rv2742c (277 aa).

A compositionally biased stretch (basic and acidic residues) spans 31-54; it reads RDENRQRHAQVDVQRRRDQPERGQ. 3 disordered regions span residues 31–70, 113–133, and 180–210; these read RDENRQRHAQVDVQRRRDQPERGQHQHRRNRDADHHPDGR, QGSPRRRERRRGQTAHQRLGR, and RQGSGRRGLGSRSGAGVPQGADARGWRHTAD. Basic residues predominate over residues 116 to 133; it reads PRRRERRRGQTAHQRLGR.

In terms of assembly, interacts with Rv2743c.

Its function is as follows. Involved in preservation of envelope integrity and tolerance to surface stress. Reverses the inhibitory effect of PspA on ClgR activity. Facilitates intracellular growth of M.tuberculosis. The sequence is that of Putative envelope-preserving system protein Rv2742c from Mycobacterium tuberculosis (strain ATCC 25618 / H37Rv).